The sequence spans 41 residues: Peroxidase 3 (41 aa).

The protein belongs to the peroxidase family. Classical plant (class III) peroxidase subfamily. Heme b serves as cofactor. It depends on Ca(2+) as a cofactor.

The protein resides in the secreted. It catalyses the reaction 2 a phenolic donor + H2O2 = 2 a phenolic radical donor + 2 H2O. Removal of H(2)O(2), oxidation of toxic reductants, biosynthesis and degradation of lignin, suberization, auxin catabolism, response to environmental stresses such as wounding, pathogen attack and oxidative stress. These functions might be dependent on each isozyme/isoform in each plant tissue. The polypeptide is Peroxidase 3 (Vitis vinifera (Grape)).